Here is a 253-residue protein sequence, read N- to C-terminus: Triosephosphate isomerase (253 aa).

9-11 (NWK) serves as a coordination point for substrate. His95 (electrophile) is an active-site residue. Catalysis depends on Glu167, which acts as the Proton acceptor. Substrate-binding positions include Gly173, Ser213, and 234–235 (GG). Phosphoserine is present on Ser213.

It belongs to the triosephosphate isomerase family. Homodimer.

The protein resides in the cytoplasm. The enzyme catalyses D-glyceraldehyde 3-phosphate = dihydroxyacetone phosphate. The protein operates within carbohydrate biosynthesis; gluconeogenesis. It participates in carbohydrate degradation; glycolysis; D-glyceraldehyde 3-phosphate from glycerone phosphate: step 1/1. Its function is as follows. Involved in the gluconeogenesis. Catalyzes stereospecifically the conversion of dihydroxyacetone phosphate (DHAP) to D-glyceraldehyde-3-phosphate (G3P). This chain is Triosephosphate isomerase, found in Bacillus licheniformis (strain ATCC 14580 / DSM 13 / JCM 2505 / CCUG 7422 / NBRC 12200 / NCIMB 9375 / NCTC 10341 / NRRL NRS-1264 / Gibson 46).